The sequence spans 419 residues: Transcription termination factor Rho (419 aa).

The region spanning 48-123 (EISGDGVLEI…LKVDTINFDR (76 aa)) is the Rho RNA-BD domain. RNA-binding regions lie at residues 61-66 (GFGFLR), 78-80 (DIY), and 108-110 (ERY). ATP contacts are provided by residues 169-174 (GKGQRG), 181-186 (KAGKTI), and Arg212. Residues 284–288 (VLTGG) are RNA-binding 2.

This sequence belongs to the Rho family. In terms of assembly, homohexamer. The homohexamer assembles into an open ring structure.

Facilitates transcription termination by a mechanism that involves Rho binding to the nascent RNA, activation of Rho's RNA-dependent ATPase activity, and release of the mRNA from the DNA template. The sequence is that of Transcription termination factor Rho from Pseudomonas fluorescens biotype C.